Consider the following 1140-residue polypeptide: MQREVGPQVAPPMFLHQIQPLPPHATAAKKRGNPWPAAAVAAAEAKGGGNWNPRMWDWDSRALTAKPSSDALRVNAGLSHHQQQQQQSPPAAAKAAEALRQGGGGSGGLNLQLGLREDAATPMDVSPAATTVSSSPSPPASSAPAQEPVVRPSKRVRSGSPGSASGGGGGGGGGGNSGGGGGSYPMCQVDDCRADLTNAKDYHRRHKVCEIHGKTTKALVGNQMQRFCQQCSRFHPLSEFDEGKRSCRRRLAGHNRRRRKTQPTDVASQLLLPGNQENAANRTQDIVNLITVIARLQGSNVGKLPSIPPIPDKDNLVQIISKINSINNGNSASKSPPSEAVDLNASHSQQQDSVQRTTNGFEKQTNGLDKQTNGFDKQADGFDKQAVPSTMDLLAVLSTALATSNPDSNTSQSQGSSDSSGNNKSKSQSTEPANVVNSHEKSIRVFSATRKNDALERSPEMYKQPDQETPPYLSLRLFGSTEEDVPCKMDTANKYLSSESSNPLDERSPSSSPPVTHKFFPIRSVDEDARIADYGEDIATVEVSTSRAWRAPPLELFKDSERPIENGSPPNPAYQSCYTSTSCSDHSPSTSNSDGQDRTGRIIFKLFGKEPSTIPGNLRGEIVNWLKHSPNEMEGYIRPGCLVLSMYLSMPAIAWDELEENLLQRVNTLVQGSDLDFWRKGRFLVRTDAQLVSYKDGATRLSKSWRTWNTPELTFVSPIAVVGGRKTSLILKGRNLTIPGTQIHCTSTGKYISKEVLCSAYPGTIYDDSGVETFDLPGEPHLILGRYFIEVENRFRGNSFPVIIANSSVCQELRSLEAELEGSQFVDGSSDDQAHDARRLKPKDEVLHFLNELGWLFQKAAASTSAEKSDSSGLDLMYFSTARFRYLLLFSSERDWCSLTKTLLEILAKRSLASDELSQETLEMLSEIHLLNRAVKRKSSHMARLLVQFVVVCPDDSKLYPFLPNVAGPGGLTPLHLAASIEDAVDIVDALTDDPQQIGLSCWHSALDDDGQSPETYAKLRNNNAYNELVAQKLVDRKNNQVTIMVGKEEIHMDQSGNVGEKNKSAIQALQIRSCNQCAILDAGLLRRPMHSRGLLARPYIHSMLAIAAVCVCVCVFMRALLRFNSGRSFKWERLDFGTI.

2 disordered regions span residues 73 to 112 and 124 to 177; these read RVNA…LNLQ and DVSP…GGNS. Composition is skewed to low complexity over residues 76 to 100 and 125 to 135; these read AGLS…EALR and VSPAATTVSSS. The segment covering 164–177 has biased composition (gly residues); it reads ASGGGGGGGGGGNS. Residues 184–261 form an SBP-type zinc finger; sequence YPMCQVDDCR…AGHNRRRRKT (78 aa). The Zn(2+) site is built by Cys-187, Cys-192, Cys-209, His-212, Cys-228, Cys-231, His-235, and Cys-247. Residues 244–260 carry the Bipartite nuclear localization signal motif; the sequence is KRSCRRRLAGHNRRRRK. Disordered stretches follow at residues 327 to 382, 403 to 472, 496 to 517, and 558 to 597; these read NNGN…ADGF, TSNP…TPPY, LSSE…PVTH, and KDSE…DGQD. A compositionally biased stretch (polar residues) spans 345-375; sequence ASHSQQQDSVQRTTNGFEKQTNGLDKQTNGF. Residues 403–430 are compositionally biased toward low complexity; sequence TSNPDSNTSQSQGSSDSSGNNKSKSQST. The segment covering 450-466 has biased composition (basic and acidic residues); it reads RKNDALERSPEMYKQPD. Over residues 496 to 514 the composition is skewed to polar residues; it reads LSSESSNPLDERSPSSSPP. A compositionally biased stretch (low complexity) spans 579-593; the sequence is TSTSCSDHSPSTSNS.

Expressed in stems, leaf sheaths, and young panicles.

The protein resides in the nucleus. Its function is as follows. Trans-acting factor that binds specifically to the consensus nucleotide sequence 5'-TNCGTACAA-3'. This is Squamosa promoter-binding-like protein 15 (SPL15) from Oryza sativa subsp. indica (Rice).